The primary structure comprises 467 residues: Stromal membrane-associated protein 1 (467 aa).

In terms of domain architecture, Arf-GAP spans 18–136 (QLILSKLLRE…KYYDKNAIAI (119 aa)). The C4-type zinc-finger motif lies at 33–56 (CADCEAKGPRWASWNIGVFICIRC). A compositionally biased stretch (polar residues) spans 145–155 (PLQPLVSSPSL). Disordered stretches follow at residues 145-224 (PLQP…LDGP) and 408-467 (KFGL…QLWK). 2 stretches are compositionally biased toward basic and acidic residues: residues 160–185 (DKNKLEKEKEKKKEEKKREKEPEKPA) and 192–204 (KLQKKDQQLEPKK). The short motif at 218–222 (LLGLD) is the Interaction with clathrin heavy chains element. Residues 413-438 (QAQQPQWSLSQMNQQMAGMSISSATP) are compositionally biased toward polar residues. Residues 446–467 (SSTTAGWSGSSSGQTLSTQLWK) are compositionally biased toward low complexity.

Interacts with ARF6. Interacts with clathrin heavy chains via the clathrin box-like motif. As to expression, detected in bone marrow, adrenal gland, trachea, lymph node, spinal cord, peripheral blood leukocytes, thyroid and stomach.

Its subcellular location is the cell membrane. In terms of biological role, GTPase activating protein that acts on ARF6. Plays a role in clathrin-dependent endocytosis. May play a role in erythropoiesis. The protein is Stromal membrane-associated protein 1 (SMAP1) of Homo sapiens (Human).